We begin with the raw amino-acid sequence, 34 residues long: Phallacidin proprotein 1 (34 aa).

Residues 1–10 (MSDINATRLP) constitute a propeptide that is removed on maturation. Positions 11–17 (AWLVDCP) form a cross-link, cyclopeptide (Ala-Pro). Residues 12–16 (WLVDC) constitute a cross-link (2'-cysteinyl-6'-hydroxytryptophan sulfoxide (Trp-Cys)). Positions 18–34 (CVGDDVNRLLTRGESLC) are excised as a propeptide.

This sequence belongs to the MSDIN fungal toxin family. Post-translationally, processed by the macrocyclase-peptidase enzyme POPB to yield a toxic cyclic heptapeptide. POPB first removes 10 residues from the N-terminus. Conformational trapping of the remaining peptide forces the enzyme to release this intermediate rather than proceed to macrocyclization. The enzyme rebinds the remaining peptide in a different conformation and catalyzes macrocyclization of the N-terminal 7 residues.

Major toxin that belongs to the bicyclic heptapeptides called phallotoxins. Although structurally related to amatoxins, phallotoxins have a different mode of action, which is the stabilization of F-actin. Phallotoxins are poisonous when administered parenterally, but not orally because of poor absorption. The sequence is that of Phallacidin proprotein 1 from Amanita bisporigera (Destroying angel).